Consider the following 205-residue polypeptide: Cytochrome bo(3) ubiquinol oxidase subunit 3 (205 aa).

At 1 to 26 (MIENKFNNTILNSNSSTHDKISETKK) the chain is on the cytoplasmic side. A helical membrane pass occupies residues 27–47 (LFGLWIYLMSDCIMFAVLFAV). At 48–69 (YAIVSSNISINLISNKIFNLSS) the chain is on the extracellular side. A helical transmembrane segment spans residues 70-90 (ILLETFLLLLSSLSCGFVVIA). At 91 to 97 (MNQKRIK) the chain is on the cytoplasmic side. Residues 98 to 118 (MIYSFLTITFIFGLIFLLMEV) form a helical membrane-spanning segment. Residues 119–138 (HEFYELIIENFGPDKNAFFS) lie on the Extracellular side of the membrane. A helical membrane pass occupies residues 139–159 (IFFTLVATHGVHIFFGLILIL). The Cytoplasmic portion of the chain corresponds to 160–177 (SILYQIKKLGLTNSIRTR). Residues 178-198 (ILCFSVFWHFLDIIWICVFTF) form a helical membrane-spanning segment. At 199 to 205 (VYLNGAI) the chain is on the extracellular side.

This sequence belongs to the cytochrome c oxidase subunit 3 family. In terms of assembly, heterooctamer of two A chains, two B chains, two C chains and two D chains.

The protein localises to the cell membrane. In terms of biological role, cytochrome bo(3) ubiquinol terminal oxidase is the component of the aerobic respiratory chain of E.coli that predominates when cells are grown at high aeration. Has proton pump activity across the membrane in addition to electron transfer, pumping 2 protons/electron. The protein is Cytochrome bo(3) ubiquinol oxidase subunit 3 (cyoC) of Buchnera aphidicola subsp. Acyrthosiphon pisum (strain APS) (Acyrthosiphon pisum symbiotic bacterium).